The chain runs to 565 residues: Receptor-like serine/threonine-protein kinase NCRK (565 aa).

Residues 1-23 (MKMRVETALAILLVLISIQQCYG) form the signal peptide. Topologically, residues 24 to 103 (GVSNYTCTCF…SKKQYLSRKL (80 aa)) are extracellular. 5 N-linked (GlcNAc...) asparagine glycosylation sites follow: Asn27, Asn37, Asn45, Asn77, and Asn85. A helical membrane pass occupies residues 104 to 124 (VIVILLFCGVLISLAFLASMI). Topologically, residues 125-565 (CYICRKDKFS…PVLLEPSAHI (441 aa)) are cytoplasmic. One can recognise a Protein kinase domain in the interval 210–495 (FSSNSVIGHG…REVVQILSTI (286 aa)). Residues 216-224 (IGHGGSSCV) and Lys238 each bind ATP. Asp339 functions as the Proton acceptor in the catalytic mechanism. 2 positions are modified to phosphothreonine: Thr378 and Thr383. Tyr391 carries the post-translational modification Phosphotyrosine.

The protein belongs to the protein kinase superfamily. Ser/Thr protein kinase family. In terms of assembly, interacts with ARAC5. Phosphorylated. In terms of tissue distribution, mostly expressed in leaf primordia, root and shoot apical meristems, lateral root primordia, and stele of older roots and hypocotyls. In leaves and cotyledons, highest levels observed in trichomes, vasculatures, and hydathode endothem.

It localises to the cell membrane. It is found in the prevacuolar compartment membrane. The protein localises to the endosome. It catalyses the reaction L-seryl-[protein] + ATP = O-phospho-L-seryl-[protein] + ADP + H(+). The catalysed reaction is L-threonyl-[protein] + ATP = O-phospho-L-threonyl-[protein] + ADP + H(+). The polypeptide is Receptor-like serine/threonine-protein kinase NCRK (NCRK) (Arabidopsis thaliana (Mouse-ear cress)).